A 230-amino-acid polypeptide reads, in one-letter code: Cytidylate kinase (230 aa).

ATP is bound at residue 12–20 (GPSGAGKGT).

It belongs to the cytidylate kinase family. Type 1 subfamily.

Its subcellular location is the cytoplasm. The catalysed reaction is CMP + ATP = CDP + ADP. It catalyses the reaction dCMP + ATP = dCDP + ADP. The chain is Cytidylate kinase from Shewanella sp. (strain MR-7).